The chain runs to 775 residues: Endothelin-converting enzyme-like 1 (775 aa).

Residues 1–61 are Cytoplasmic-facing; that stretch reads MEAPYSMTAH…LPRWNRREVC (61 aa). The interval 23–51 is disordered; it reads CGTGGARGTSLPPGFPRSSGRSASGARSG. Positions 32-51 are enriched in low complexity; that stretch reads SLPPGFPRSSGRSASGARSG. The chain crosses the membrane as a helical; Signal-anchor for type II membrane protein span at residues 62-82; it reads LLSGLVFAAGLCAILAAMLAL. The Lumenal segment spans residues 83 to 775; the sequence is KYLGPGAAGT…MNPVHKCSVW (693 aa). The 677-residue stretch at 99 to 775 folds into the Peptidase M13 domain; it reads GCPERKAFAR…MNPVHKCSVW (677 aa). Cystine bridges form between Cys-124-Cys-760, Cys-132-Cys-720, Cys-188-Cys-441, and Cys-649-Cys-772. N-linked (GlcNAc...) asparagine glycans are attached at residues Asn-255 and Asn-322. Position 612 (His-612) interacts with Zn(2+). Glu-613 is an active-site residue. His-616 contributes to the Zn(2+) binding site. The N-linked (GlcNAc...) asparagine glycan is linked to Asn-656. Glu-672 contributes to the Zn(2+) binding site. The Proton donor role is filled by Asp-676.

Belongs to the peptidase M13 family. It depends on Zn(2+) as a cofactor. Highly expressed in the CNS, in particular in neurons of the caudate putamen, diagonal band, the paraventricular nucleus of the thalamus, part of the hypothalamus, in cranial motor nuclei, inferior olive, and substantia gelatinosa of the spinal tract trigeminal nucleus. Not detected in cerebral cortex, hippocampus and cerebellum.

It localises to the membrane. May contribute to the degradation of peptide hormones and be involved in the inactivation of neuronal peptides. Cleaves the synthetic substrate Z-Gly-Gly-Leu-pNA and releases pNA. May protect against C2-ceramide-induced apoptosis. In Rattus norvegicus (Rat), this protein is Endothelin-converting enzyme-like 1 (Ecel1).